A 282-amino-acid polypeptide reads, in one-letter code: MKTFHTVAELRTALKIERLKDKKIVFVPTMGNLHDGHMSLIRKAKEEGDIIVSSIFVNPMQFSDQSDLERYPKTLEEDKRVLEANGCNYLFAPDALEMYPDGKRSQTQIEVVGISDILCGASRPGHFVGVSTVVTKLFNIVQPDTAIFGNKDFQQLKVIQDMVRDLSSNVRIIGVDTARNEDGLAMSSRNGYLTEEERRIAPTIYQTLLWAKEALLENRASHEDICEQAQQKLEAAGFRRDYFEIRAQENLQTPSEEEKRLVILTAAYLGKARLIDNLRVEL.

30-37 (MGNLHDGH) is a binding site for ATP. Residue histidine 37 is the Proton donor of the active site. Glutamine 61 lines the (R)-pantoate pocket. Glutamine 61 is a binding site for beta-alanine. 149 to 152 (GNKD) is a binding site for ATP. Glutamine 155 lines the (R)-pantoate pocket. ATP-binding positions include alanine 178 and 186 to 189 (MSSR).

This sequence belongs to the pantothenate synthetase family. As to quaternary structure, homodimer.

Its subcellular location is the cytoplasm. The catalysed reaction is (R)-pantoate + beta-alanine + ATP = (R)-pantothenate + AMP + diphosphate + H(+). Its pathway is cofactor biosynthesis; (R)-pantothenate biosynthesis; (R)-pantothenate from (R)-pantoate and beta-alanine: step 1/1. Its function is as follows. Catalyzes the condensation of pantoate with beta-alanine in an ATP-dependent reaction via a pantoyl-adenylate intermediate. The protein is Pantothenate synthetase of Marinomonas sp. (strain MWYL1).